Consider the following 581-residue polypeptide: Fibrous sheath-interacting protein 1 (581 aa).

Positions Met-1–Ser-77 are disordered. The span at Pro-14 to Ser-30 shows a compositional bias: polar residues. A compositionally biased stretch (basic and acidic residues) spans Gly-52–Ser-77. The residue at position 87 (Ser-87) is a Phosphoserine. Positions Glu-105–Glu-153 form a coiled coil. 2 disordered regions span residues Ser-338–Gly-365 and His-555–Pro-581. Basic and acidic residues-rich tracts occupy residues Leu-344 to Met-360 and Gln-569 to Pro-581.

It belongs to the FSIP1 family.

In Homo sapiens (Human), this protein is Fibrous sheath-interacting protein 1 (FSIP1).